A 449-amino-acid chain; its full sequence is Ribosomal protein uS12 methylthiotransferase RimO (449 aa).

An MTTase N-terminal domain is found at 5–116; that stretch reads PTIAISHLGC…IVDVVQRVEN (112 aa). Residues cysteine 14, cysteine 50, cysteine 79, cysteine 154, cysteine 158, and cysteine 161 each coordinate [4Fe-4S] cluster. The Radical SAM core domain occupies 140 to 369; it reads TTTEGVAYLR…MEVQQPISIK (230 aa). The region spanning 372–438 is the TRAM domain; that stretch reads QNCIGQTVPV…VYDLYGKTNL (67 aa).

Belongs to the methylthiotransferase family. RimO subfamily. The cofactor is [4Fe-4S] cluster.

The protein resides in the cytoplasm. It carries out the reaction L-aspartate(89)-[ribosomal protein uS12]-hydrogen + (sulfur carrier)-SH + AH2 + 2 S-adenosyl-L-methionine = 3-methylsulfanyl-L-aspartate(89)-[ribosomal protein uS12]-hydrogen + (sulfur carrier)-H + 5'-deoxyadenosine + L-methionine + A + S-adenosyl-L-homocysteine + 2 H(+). Catalyzes the methylthiolation of an aspartic acid residue of ribosomal protein uS12. The sequence is that of Ribosomal protein uS12 methylthiotransferase RimO from Rippkaea orientalis (strain PCC 8801 / RF-1) (Cyanothece sp. (strain PCC 8801)).